A 151-amino-acid chain; its full sequence is Mediator of RNA polymerase II transcription subunit 32 (151 aa).

Residues 128–151 (GVAPGSVHSSSTGFDSRFSEDSTQ) form a disordered region.

The protein belongs to the mediator complex subunit 32 family. As to quaternary structure, oligomers. Component of the Mediator complex. Interacts with MED6. Interacts with GEBPL.

The protein resides in the nucleus. Component of the Mediator complex, a coactivator involved in the regulated transcription of nearly all RNA polymerase II-dependent genes. Mediator functions as a bridge to convey information from gene-specific regulatory proteins to the basal RNA polymerase II transcription machinery. The Mediator complex, having a compact conformation in its free form, is recruited to promoters by direct interactions with regulatory proteins and serves for the assembly of a functional pre-initiation complex with RNA polymerase II and the general transcription factors. This chain is Mediator of RNA polymerase II transcription subunit 32 (MED32), found in Arabidopsis thaliana (Mouse-ear cress).